Reading from the N-terminus, the 199-residue chain is Probable GTP-binding protein EngB (199 aa).

The EngB-type G domain maps to 28 to 199 (DLPEIALAGR…ESWDTILEYL (172 aa)). GTP contacts are provided by residues 36 to 43 (GRSNVGKS), 63 to 67 (GKTQL), 81 to 84 (DVPG), 148 to 151 (TKAD), and 180 to 182 (FSS). Mg(2+)-binding residues include Ser-43 and Thr-65.

This sequence belongs to the TRAFAC class TrmE-Era-EngA-EngB-Septin-like GTPase superfamily. EngB GTPase family. Mg(2+) serves as cofactor.

Functionally, necessary for normal cell division and for the maintenance of normal septation. The polypeptide is Probable GTP-binding protein EngB (Streptococcus equi subsp. equi (strain 4047)).